Consider the following 241-residue polypeptide: Alpha/beta-tubulin-N-acetyltransferase 9 (241 aa).

An N-acetyltransferase domain is found at 34–181 (EELRHLTASE…VTLRLAVSEP (148 aa)).

This sequence belongs to the acetyltransferase family. GNAT subfamily.

It carries out the reaction N-terminal L-methionyl-[tubulin] + acetyl-CoA = N-terminal N(alpha)-acetyl-L-methionyl-[tubulin] + CoA + H(+). In terms of biological role, N-acetyltransferase that mediates the acetylation of the N-terminal residues of alpha- and beta-tubulin. This Mus musculus (Mouse) protein is Alpha/beta-tubulin-N-acetyltransferase 9 (Nat9).